The chain runs to 617 residues: Electron transfer flavoprotein-ubiquinone oxidoreductase, mitochondrial (617 aa).

The transit peptide at 1 to 33 (MQVLLARLACPVYQCFHAIKIKKNYLPLCATRW) directs the protein to the mitochondrion. 71–85 (VVIVGAGPAGLSAAA) is an FAD binding site. At Lys-96 the chain carries N6-acetyllysine. An intramembrane segment occupies 109 to 130 (IGAHTLSGACLDPRALQELFPD). 2 positions are modified to N6-acetyllysine: Lys-132 and Lys-223. Residues Gly-305 and Gly-306 each contribute to the a ubiquinone site. An N6-acetyllysine modification is found at Lys-357. An intramembrane segment occupies 428-447 (IGLDVTEYEDNLKKSWVWKE). A Phosphoserine modification is found at Ser-551. Cys-561, Cys-586, Cys-589, and Cys-592 together coordinate [4Fe-4S] cluster. In terms of domain architecture, 4Fe-4S ferredoxin-type spans 577–606 (FRLQINAQNCVHCKTCDIKDPSQNINWVVP).

This sequence belongs to the ETF-QO/FixC family. Monomer. It depends on [4Fe-4S] cluster as a cofactor. The cofactor is FAD.

The protein localises to the mitochondrion inner membrane. The enzyme catalyses a ubiquinone + reduced [electron-transfer flavoprotein] = a ubiquinol + oxidized [electron-transfer flavoprotein] + H(+). Its function is as follows. Accepts electrons from ETF and reduces ubiquinone. The sequence is that of Electron transfer flavoprotein-ubiquinone oxidoreductase, mitochondrial (ETFDH) from Bos taurus (Bovine).